Reading from the N-terminus, the 294-residue chain is Ribosomal RNA small subunit methyltransferase H (294 aa).

S-adenosyl-L-methionine is bound by residues 36-38 (GGH), Asp55, Phe82, Asp97, and Gln104. The interval 265 to 285 (KPTVATDDEQNRNPRSRSAKW) is disordered.

It belongs to the methyltransferase superfamily. RsmH family.

It is found in the cytoplasm. The catalysed reaction is cytidine(1402) in 16S rRNA + S-adenosyl-L-methionine = N(4)-methylcytidine(1402) in 16S rRNA + S-adenosyl-L-homocysteine + H(+). Specifically methylates the N4 position of cytidine in position 1402 (C1402) of 16S rRNA. The sequence is that of Ribosomal RNA small subunit methyltransferase H from Synechococcus sp. (strain CC9902).